The primary structure comprises 711 residues: DNA ligase (711 aa).

Residues 1–29 (MSEDAIGQQVPAAQEAAAGAEPNSAARER) form a disordered region. Over residues 12-25 (AAQEAAAGAEPNSA) the composition is skewed to low complexity. NAD(+) is bound by residues 54 to 58 (DAAFD), 103 to 104 (SL), and Glu133. The N6-AMP-lysine intermediate role is filled by Lys135. The NAD(+) site is built by Arg156, Glu197, Lys313, and Lys337. Zn(2+) is bound by residues Cys431, Cys434, Cys450, and Cys456. The 90-residue stretch at 620–709 (QGPRPLEGVT…PEAARAVARV (90 aa)) folds into the BRCT domain.

This sequence belongs to the NAD-dependent DNA ligase family. LigA subfamily. Mg(2+) is required as a cofactor. The cofactor is Mn(2+).

It carries out the reaction NAD(+) + (deoxyribonucleotide)n-3'-hydroxyl + 5'-phospho-(deoxyribonucleotide)m = (deoxyribonucleotide)n+m + AMP + beta-nicotinamide D-nucleotide.. DNA ligase that catalyzes the formation of phosphodiester linkages between 5'-phosphoryl and 3'-hydroxyl groups in double-stranded DNA using NAD as a coenzyme and as the energy source for the reaction. It is essential for DNA replication and repair of damaged DNA. This is DNA ligase from Salinispora tropica (strain ATCC BAA-916 / DSM 44818 / JCM 13857 / NBRC 105044 / CNB-440).